A 545-amino-acid chain; its full sequence is DNA mismatch repair protein MutL (545 aa).

The interval 517–545 is disordered; sequence RRSGARGGGEARPRPQEESFPEAPLPREP.

This sequence belongs to the DNA mismatch repair MutL/HexB family.

Functionally, this protein is involved in the repair of mismatches in DNA. It is required for dam-dependent methyl-directed DNA mismatch repair. May act as a 'molecular matchmaker', a protein that promotes the formation of a stable complex between two or more DNA-binding proteins in an ATP-dependent manner without itself being part of a final effector complex. In Thermus thermophilus (strain ATCC 27634 / DSM 579 / HB8), this protein is DNA mismatch repair protein MutL.